We begin with the raw amino-acid sequence, 178 residues long: ATP synthase subunit delta (178 aa).

This sequence belongs to the ATPase delta chain family. As to quaternary structure, F-type ATPases have 2 components, F(1) - the catalytic core - and F(0) - the membrane proton channel. F(1) has five subunits: alpha(3), beta(3), gamma(1), delta(1), epsilon(1). F(0) has three main subunits: a(1), b(2) and c(10-14). The alpha and beta chains form an alternating ring which encloses part of the gamma chain. F(1) is attached to F(0) by a central stalk formed by the gamma and epsilon chains, while a peripheral stalk is formed by the delta and b chains.

The protein resides in the cell inner membrane. Functionally, f(1)F(0) ATP synthase produces ATP from ADP in the presence of a proton or sodium gradient. F-type ATPases consist of two structural domains, F(1) containing the extramembraneous catalytic core and F(0) containing the membrane proton channel, linked together by a central stalk and a peripheral stalk. During catalysis, ATP synthesis in the catalytic domain of F(1) is coupled via a rotary mechanism of the central stalk subunits to proton translocation. Its function is as follows. This protein is part of the stalk that links CF(0) to CF(1). It either transmits conformational changes from CF(0) to CF(1) or is implicated in proton conduction. The sequence is that of ATP synthase subunit delta from Pseudomonas putida (strain ATCC 700007 / DSM 6899 / JCM 31910 / BCRC 17059 / LMG 24140 / F1).